Here is a 207-residue protein sequence, read N- to C-terminus: Superoxide dismutase [Mn] (207 aa).

Residues His28, His76, Asp160, and His164 each coordinate Mn(2+).

It belongs to the iron/manganese superoxide dismutase family. Requires Mn(2+) as cofactor.

It carries out the reaction 2 superoxide + 2 H(+) = H2O2 + O2. Destroys superoxide anion radicals which are normally produced within the cells and which are toxic to biological systems. This is Superoxide dismutase [Mn] (sodA) from Mycobacterium leprae (strain TN).